The sequence spans 154 residues: Transcriptional repressor NrdR (154 aa).

The interval 1-22 is disordered; the sequence is MRCPFCGNDDTQVKDSRPTEDN. The segment at 3–34 is a zinc-finger region; it reads CPFCGNDDTQVKDSRPTEDNSAIRRRRFCPAC. Over residues 11 to 22 the composition is skewed to basic and acidic residues; sequence TQVKDSRPTEDN. In terms of domain architecture, ATP-cone spans 49-139; sequence LTVVKSGGSR…VYKDFREVTD (91 aa).

It belongs to the NrdR family. The cofactor is Zn(2+).

Functionally, negatively regulates transcription of bacterial ribonucleotide reductase nrd genes and operons by binding to NrdR-boxes. The chain is Transcriptional repressor NrdR from Rhodospirillum centenum (strain ATCC 51521 / SW).